The following is a 313-amino-acid chain: Aspartate carbamoyltransferase catalytic subunit (313 aa).

Carbamoyl phosphate contacts are provided by Arg53 and Thr54. Lys82 lines the L-aspartate pocket. Positions 103, 131, and 134 each coordinate carbamoyl phosphate. L-aspartate-binding residues include Arg163 and Arg224. Carbamoyl phosphate is bound by residues Leu263 and Pro264.

The protein belongs to the aspartate/ornithine carbamoyltransferase superfamily. ATCase family. As to quaternary structure, heterooligomer of catalytic and regulatory chains.

It catalyses the reaction carbamoyl phosphate + L-aspartate = N-carbamoyl-L-aspartate + phosphate + H(+). It participates in pyrimidine metabolism; UMP biosynthesis via de novo pathway; (S)-dihydroorotate from bicarbonate: step 2/3. Its function is as follows. Catalyzes the condensation of carbamoyl phosphate and aspartate to form carbamoyl aspartate and inorganic phosphate, the committed step in the de novo pyrimidine nucleotide biosynthesis pathway. The sequence is that of Aspartate carbamoyltransferase catalytic subunit from Halorubrum lacusprofundi (strain ATCC 49239 / DSM 5036 / JCM 8891 / ACAM 34).